The following is a 938-amino-acid chain: Isoleucine--tRNA ligase (938 aa).

The short motif at 58–68 (PYANGSIHIGH) is the 'HIGH' region element. The residue at position 183 (Lys-183) is an N6-acetyllysine. L-isoleucyl-5'-AMP is bound at residue Glu-561. The 'KMSKS' region signature appears at 602-606 (KMSKS). Position 605 (Lys-605) interacts with ATP. The Zn(2+) site is built by Cys-901, Cys-904, Cys-921, and Cys-924.

The protein belongs to the class-I aminoacyl-tRNA synthetase family. IleS type 1 subfamily. In terms of assembly, monomer. It depends on Zn(2+) as a cofactor.

It is found in the cytoplasm. The catalysed reaction is tRNA(Ile) + L-isoleucine + ATP = L-isoleucyl-tRNA(Ile) + AMP + diphosphate. Catalyzes the attachment of isoleucine to tRNA(Ile). As IleRS can inadvertently accommodate and process structurally similar amino acids such as valine, to avoid such errors it has two additional distinct tRNA(Ile)-dependent editing activities. One activity is designated as 'pretransfer' editing and involves the hydrolysis of activated Val-AMP. The other activity is designated 'posttransfer' editing and involves deacylation of mischarged Val-tRNA(Ile). In Escherichia coli O7:K1 (strain IAI39 / ExPEC), this protein is Isoleucine--tRNA ligase.